A 74-amino-acid polypeptide reads, in one-letter code: MIDIKAWAEYVVEWAAKDPYGFLTTVILALTPLFIASALLSWKLAKMIEAKDREQKKKQKRQENIAKAKRAKKD.

A helical membrane pass occupies residues 20-40 (YGFLTTVILALTPLFIASALL). Positions 42 to 74 (WKLAKMIEAKDREQKKKQKRQENIAKAKRAKKD) form a coiled coil. Basic and acidic residues predominate over residues 53–66 (REQKKKQKRQENIA). Positions 53-74 (REQKKKQKRQENIAKAKRAKKD) are disordered.

Belongs to the SMIM15 family.

The protein localises to the membrane. The chain is Small integral membrane protein 15 (smim15) from Danio rerio (Zebrafish).